Here is a 977-residue protein sequence, read N- to C-terminus: uncharacterized protein (977 aa).

The first 24 residues, 1–24 (MQSNLLKVLGVLAIVATLVCFIFA), serve as a signal peptide directing secretion. The interval 125 to 146 (TESTRPGKSNLDDKGNMIPIPR) is disordered. 6 consecutive transmembrane segments (helical) span residues 612-632 (IKAI…LGFA), 722-742 (LGLS…IVII), 754-774 (AFMA…FLLF), 796-816 (VVMM…LDFV), 833-853 (FIGT…INWF), and 866-886 (GVNM…YGYV). The tract at residues 918–977 (KALSPIGMDDKTRQGITGRAEARLKQRNKTLDQAEKNRKNTPKEGGEKTNAEPPQPEARG) is disordered. Basic and acidic residues predominate over residues 937–967 (AEARLKQRNKTLDQAEKNRKNTPKEGGEKTN).

It belongs to the TrbL/VirB6 family.

It localises to the cell membrane. This is an uncharacterized protein from Rickettsia felis (strain ATCC VR-1525 / URRWXCal2) (Rickettsia azadi).